The chain runs to 863 residues: Leucine--tRNA ligase (863 aa).

The 'HIGH' region signature appears at 42–53; sequence PYPSGSGLHVGH. The short motif at 635–639 is the 'KMSKS' region element; that stretch reads KMSKS. Residue Lys638 participates in ATP binding.

Belongs to the class-I aminoacyl-tRNA synthetase family.

It localises to the cytoplasm. It catalyses the reaction tRNA(Leu) + L-leucine + ATP = L-leucyl-tRNA(Leu) + AMP + diphosphate. In Salinibacter ruber (strain DSM 13855 / M31), this protein is Leucine--tRNA ligase.